The sequence spans 220 residues: Phosphatidylserine decarboxylase proenzyme (220 aa).

The Schiff-base intermediate with substrate; via pyruvic acid role is filled by serine 188. Serine 188 bears the Pyruvic acid (Ser); by autocatalysis mark.

The protein belongs to the phosphatidylserine decarboxylase family. PSD-A subfamily. In terms of assembly, heterodimer of a large membrane-associated beta subunit and a small pyruvoyl-containing alpha subunit. It depends on pyruvate as a cofactor. Post-translationally, is synthesized initially as an inactive proenzyme. Formation of the active enzyme involves a self-maturation process in which the active site pyruvoyl group is generated from an internal serine residue via an autocatalytic post-translational modification. Two non-identical subunits are generated from the proenzyme in this reaction, and the pyruvate is formed at the N-terminus of the alpha chain, which is derived from the carboxyl end of the proenzyme. The post-translation cleavage follows an unusual pathway, termed non-hydrolytic serinolysis, in which the side chain hydroxyl group of the serine supplies its oxygen atom to form the C-terminus of the beta chain, while the remainder of the serine residue undergoes an oxidative deamination to produce ammonia and the pyruvoyl prosthetic group on the alpha chain.

It localises to the cell membrane. It catalyses the reaction a 1,2-diacyl-sn-glycero-3-phospho-L-serine + H(+) = a 1,2-diacyl-sn-glycero-3-phosphoethanolamine + CO2. The protein operates within phospholipid metabolism; phosphatidylethanolamine biosynthesis; phosphatidylethanolamine from CDP-diacylglycerol: step 2/2. Catalyzes the formation of phosphatidylethanolamine (PtdEtn) from phosphatidylserine (PtdSer). This Cytophaga hutchinsonii (strain ATCC 33406 / DSM 1761 / CIP 103989 / NBRC 15051 / NCIMB 9469 / D465) protein is Phosphatidylserine decarboxylase proenzyme.